The following is a 97-amino-acid chain: MTILASICKLGNTKSTSSSIGSSYSSAVSFGSNSVSCGECGGDGPSFPNASPRTGVKAGVNVDGLLGAIGKTVNGMLISPNGGGGGMGMGGGSCGCN.

This sequence belongs to the hssA/B family.

In Dictyostelium discoideum (Social amoeba), this protein is HssA/B-like protein 27 (hssl27).